Here is a 201-residue protein sequence, read N- to C-terminus: dTTP/UTP pyrophosphatase (201 aa).

Aspartate 80 acts as the Proton acceptor in catalysis.

It belongs to the Maf family. YhdE subfamily. It depends on a divalent metal cation as a cofactor.

The protein resides in the cytoplasm. It catalyses the reaction dTTP + H2O = dTMP + diphosphate + H(+). The catalysed reaction is UTP + H2O = UMP + diphosphate + H(+). Functionally, nucleoside triphosphate pyrophosphatase that hydrolyzes dTTP and UTP. May have a dual role in cell division arrest and in preventing the incorporation of modified nucleotides into cellular nucleic acids. The protein is dTTP/UTP pyrophosphatase of Novosphingobium aromaticivorans (strain ATCC 700278 / DSM 12444 / CCUG 56034 / CIP 105152 / NBRC 16084 / F199).